The following is a 172-amino-acid chain: Translation initiation factor IF-3 (172 aa).

This sequence belongs to the IF-3 family. As to quaternary structure, monomer.

It localises to the cytoplasm. IF-3 binds to the 30S ribosomal subunit and shifts the equilibrium between 70S ribosomes and their 50S and 30S subunits in favor of the free subunits, thus enhancing the availability of 30S subunits on which protein synthesis initiation begins. This is Translation initiation factor IF-3 from Geobacillus stearothermophilus (Bacillus stearothermophilus).